The primary structure comprises 571 residues: MAEEGAILKVTKDLRAAVSAILQGYGDGQGPVTDTSAELHRLCGCLELLLQFDQKEQKSFLGPRKDYWDFLCTALRRQRGNMEPIHFVRSQDKLKTPLGKGRAFIRFCLARGQLAEALQLCLLNSELTREWYGPRSPLLCPERQEDILDSLYALNGVAFELDLQQPDLDGAWPMFSESRCSSSTQTQGRRPRKNKDAPKKIPAAYGGPENVQIEDSHTSQAICLQDAPSGQQLAGLPRSQQQRHLPFFLEKKGESSRKHRYPQSMWEPEGKELQLDQEERAPWIEIFLGNSTPSTQGQGKGAMGTQKEVIGMEAEVTGVLLVAEGQRTTEGTHKKEAEWSHVQRLLMPSPRGAVEGAVSGSRQGSGGSSILGEPWVLQGHATKEDSTVENPQVQTEVTLVARREEQAEVSLQDEIKSLRLGLRKAEEQAQRQEQLLREQEGELQALREQLSRCQEERAELQAQLEQKQQEAERRDAMYQEELGGQRDLVQAMKRRVLELIQEKDRLWQRLQHLSSMAPECCVACSKIFGRFSRRYPCRLCGGLLCHACSMDYKKRDRCCPPCAQGREAQVT.

An RUN domain is found at 33–166; sequence TDTSAELHRL…VAFELDLQQP (134 aa). The interval 174-207 is disordered; that stretch reads MFSESRCSSSTQTQGRRPRKNKDAPKKIPAAYGG. A compositionally biased stretch (polar residues) spans 178 to 188; that stretch reads SRCSSSTQTQG. A coiled-coil region spans residues 408 to 481; the sequence is EVSLQDEIKS…ERRDAMYQEE (74 aa). The FYVE-type zinc finger occupies 474–567; the sequence is RDAMYQEELG…CCPPCAQGRE (94 aa). Cysteine 521, cysteine 524, cysteine 537, cysteine 540, cysteine 545, cysteine 548, cysteine 559, and cysteine 562 together coordinate Zn(2+).

Forms homodimers (via coiled coil domain). Interacts with RAB7A. Forms a ternary complex with RAB7A and LAMP2; the interaction with RAB7A is mediated by RUFY4 (via RUN and coiled coil domains). Interacts with GTP-, but not GDP-bound ARL8A and ARL8B. Interacts with dynactin/DCTN1 and the dynein intermediate chain DYNC1I1/2.

It localises to the cytoplasmic vesicle. The protein localises to the autophagosome. The protein resides in the lysosome. Its function is as follows. ARL8 effector that promotes the coupling of endolysosomes to dynein-dynactin for retrograde transport along microtubules. Acts by binding both GTP-bound ARL8 and dynein-dynactin. In nonneuronal cells, promotes concentration of endolysosomes in the juxtanuclear area. In hippocampal neurons, drives retrograde transport of endolysosomes from the axon to the soma. Positive regulator of macroautophagy in dendritic cells. Increases autophagic flux, probably by stimulating both autophagosome formation and facilitating tethering with lysosomes. Binds to phosphatidylinositol 3-phosphate (PtdIns3P) through its FYVE-type zinc finger. Positive regulator of osteosclast bone-resorbing activity, possibly by promoting late endosome-lysosome fusion by acting as an adapter protein between RAB7A on late endosomes and LAMP2 on primary lysosomes. This is RUN and FYVE domain-containing protein 4 (RUFY4) from Homo sapiens (Human).